We begin with the raw amino-acid sequence, 371 residues long: uncharacterized protein (371 aa).

3 Solcar repeats span residues 3 to 98 (DDSL…CKVL), 131 to 276 (RYWG…FKSF), and 284 to 369 (KSNF…VRKW). Helical transmembrane passes span 9-29 (AIAG…LDVV), 73-93 (GVGP…VVYE), 137-157 (IFSA…IWVV), 253-273 (LFPS…YEYF), 290-310 (VLAA…HEVL), and 341-362 (YYSG…TFLS).

It belongs to the mitochondrial carrier (TC 2.A.29) family.

It localises to the mitochondrion inner membrane. This is an uncharacterized protein from Schizosaccharomyces pombe (strain 972 / ATCC 24843) (Fission yeast).